The sequence spans 455 residues: MEDPARTQDILGQLPILKAYNHILLGFALSEDISRESVVQALNAAALQLATSVPWIGGKVVNVGSGPGNTGLFRSVPCELFAPPNSILRVKDVTADYPSYEEIVSAKGPISMLDGSIIAPKPAFPVSYVDCESDPAPALLIQATFLKGGVLLDFAAQHNLSDGGGVIQMINLVATTLRGEKIPEKAIVQANRDRRDVIRLLDPAEPMLDHSHLVRPPPSAIPANPVVSPDNFIWQYFRFSASTLGALKNIASNPADFDPSVKFISTDDALCAFLWQRIATVRLRRRQTPDDLCKMTRAVDIRRTLQVPSEYMGVMVYNVSGRLPLGQLATASLARAASELRKALNSIDEYAVRSFATFVARQPDKSTLAYAGKFNPDVDMGVSSMASVPLYRADFGPLGAPGLVRRPNFAPVLSTIYVMPQTVEGDVDVLICLTREDIGALRADPEWTAYAEYIG.

Belongs to the trichothecene 3-O-acetyltransferase family.

Its pathway is secondary metabolite biosynthesis. In terms of biological role, O-acetyltransferase; part of the gene cluster that mediates the biosynthesis of azaphilone pigments (MonAzPs), a complex mixture of compounds with a common azaphilone skeleton very widely used as food colorants. Within the pathway, pigD directly transfers the fatty acyl chain from the beta-ketoacyl-ACP produced by the pigJ-pigK fatty acid synthase (FAS) to the C-4 alcohol. The first step of the pathway is performed by the nrPKS pigA that forms the hexaketide precursor from successive condensations of five malonyl-CoA units, with a simple acetyl-CoA starter unit. The role of esterase pigG is not clear, but it may play at most a supplementary role in the formation of the benzaldehyde produced by the pigA nrPKS. This very reactive benzaldehyde is intercepted by the pigC ketoreductase that to provide the first stable enzyme-free MonAzPs intermediate, 6-(4-hydroxy-2-oxopentyl)-3-methyl-2,4-dioxocyclohexane carbaldehyde, also known as M7PKS-1. The FAD-dependent monooxygenase pigN hydroxylates M7PKS-1 at C-4, which triggers the formation of the pyran ring. PigJ, pigK and pigD are involved in the acetylation of the pyran ring. PigJ and pigK form the two subunits of a dedicated fungal FAS that produces the side chain fatty acyl moiety of MonAzPs and pigD transfers the fatty acyl chain to the C-4 alcohol. PigM and pigO are involved in the elimination of the omega-1 alcohol. PigM acts as an O-acetyltransferase that synthesizes the putative O-11 acetyl intermediate whereas pigO eliminates acetic acid to yield an intermediate with a C10(11) double bond. The dehydration of the C-11 alcohol followed by the reduction of the C6(7) double bond by the NAD(P)H-dependent oxidoreductase pigE increases the electrophilicity of the C-5 ketone of the resulting acyl benzopyran. This in turn sets up the C-5 ketone for an intramolecular Knoevenagel aldol condensation with the C-20 enol of the side chain. This condensation affords the characteristic linear tricyclic carbon skeletons of the yellow pigments that serve as the common precursors for the classical yellow pigments monascin and ankaflavin, orange pigments rubopunctatin and monascorubrin, and red pigments ribropunctamine and monascorubramine. The FAD-dependent oxidoreductase pigF is especially invoved in the biosynthesis of orange and red pigments via desaturation of C6(7). In Monascus ruber (Mold), this protein is O-acyltransferase pigD.